Consider the following 327-residue polypeptide: Eukaryotic translation initiation factor 3 subunit I (327 aa).

5 WD repeats span residues 8–47, 50–89, 147–186, 189–228, and 286–327; these read GHQR…RLGT, GHIG…ALGK, EQQS…ELNS, DHTA…CLKT, and GHFG…HTFE.

The protein belongs to the eIF-3 subunit I family. As to quaternary structure, component of the eukaryotic translation initiation factor 3 (eIF-3) complex.

It is found in the cytoplasm. Component of the eukaryotic translation initiation factor 3 (eIF-3) complex, which is involved in protein synthesis of a specialized repertoire of mRNAs and, together with other initiation factors, stimulates binding of mRNA and methionyl-tRNAi to the 40S ribosome. The eIF-3 complex specifically targets and initiates translation of a subset of mRNAs involved in cell proliferation. In Anopheles gambiae (African malaria mosquito), this protein is Eukaryotic translation initiation factor 3 subunit I.